Reading from the N-terminus, the 117-residue chain is Large ribosomal subunit protein bL19 (117 aa).

This sequence belongs to the bacterial ribosomal protein bL19 family.

This protein is located at the 30S-50S ribosomal subunit interface and may play a role in the structure and function of the aminoacyl-tRNA binding site. This is Large ribosomal subunit protein bL19 from Christiangramia forsetii (strain DSM 17595 / CGMCC 1.15422 / KT0803) (Gramella forsetii).